The primary structure comprises 317 residues: Melanocyte-stimulating hormone receptor (317 aa).

Residues 1–37 (MPAQGSQRSXLGSLNSTLMATPSLGLAANQSGPQCLE) are Extracellular-facing. N-linked (GlcNAc...) asparagine glycosylation is found at N15 and N29. Residues 38–63 (VSVPDGLFLCLGLVSLVENMLVVAAI) form a helical membrane-spanning segment. The Cytoplasmic portion of the chain corresponds to 64–72 (AKNRNLHSP). The helical transmembrane segment at 73-93 (MYCFICCLALSDLLVSISNVL) threads the bilayer. Topologically, residues 94 to 118 (ETAVMLLLEAGALAVGATVVQQLDN) are extracellular. The chain crosses the membrane as a helical span at residues 119-140 (VIDVLICSSMVSSLCFLGAIAM). Over 141–163 (DRYISIFYALRYHSIVTLSRAQW) the chain is Cytoplasmic. A helical transmembrane segment spans residues 164 to 183 (ATAAVWAASILSSTLFIAYY). Topologically, residues 184–191 (DRTVVLLC) are extracellular. Residues 192–211 (LVVFFLAMLVLMAVLYAHML) traverse the membrane as a helical segment. Residues 212–240 (TQACQHVQGITRLHKRQHLVQQGFGLKGA) are Cytoplasmic-facing. A helical membrane pass occupies residues 241 to 266 (ATLTILLGVFLLCWGPFFLHLTLIAV). At 267–279 (CPQHPTCSCVFKN) the chain is on the extracellular side. The chain crosses the membrane as a helical span at residues 280-300 (FKLFLALIICNAIVDPLIYAF). The Cytoplasmic portion of the chain corresponds to 301–317 (RSQELRKTLKEVLLFSW).

This sequence belongs to the G-protein coupled receptor 1 family. In terms of assembly, interacts with MGRN1, but does not undergo MGRN1-mediated ubiquitination; this interaction competes with GNAS-binding and thus inhibits agonist-induced cAMP production. Interacts with OPN3; the interaction results in a decrease in MC1R-mediated cAMP signaling and ultimately a decrease in melanin production in melanocytes.

The protein resides in the cell membrane. Its function is as follows. Receptor for MSH (alpha, beta and gamma) and ACTH. The activity of this receptor is mediated by G proteins which activate adenylate cyclase. Mediates melanogenesis, the production of eumelanin (black/brown) and phaeomelanin (red/yellow), via regulation of cAMP signaling in melanocytes. The sequence is that of Melanocyte-stimulating hormone receptor (MC1R) from Galago senegalensis (Northern lesser bushbaby).